A 244-amino-acid polypeptide reads, in one-letter code: tRNA pseudouridine synthase A (244 aa).

The Nucleophile role is filled by D52. Y110 contacts substrate.

Belongs to the tRNA pseudouridine synthase TruA family. In terms of assembly, homodimer.

It carries out the reaction uridine(38/39/40) in tRNA = pseudouridine(38/39/40) in tRNA. Its function is as follows. Formation of pseudouridine at positions 38, 39 and 40 in the anticodon stem and loop of transfer RNAs. The chain is tRNA pseudouridine synthase A from Geotalea daltonii (strain DSM 22248 / JCM 15807 / FRC-32) (Geobacter daltonii).